Consider the following 347-residue polypeptide: Dihydroorotase (347 aa).

Zn(2+)-binding residues include His-14 and His-16. Residues 16–18 (HLR) and Asn-42 contribute to the substrate site. Zn(2+) contacts are provided by Lys-100, His-137, and His-175. Residue Lys-100 is modified to N6-carboxylysine. His-137 provides a ligand contact to substrate. Leu-220 contributes to the substrate binding site. Asp-248 provides a ligand contact to Zn(2+). The active site involves Asp-248. Substrate is bound by residues His-252 and Ala-264.

This sequence belongs to the metallo-dependent hydrolases superfamily. DHOase family. Class II DHOase subfamily. Homodimer. Zn(2+) is required as a cofactor.

It carries out the reaction (S)-dihydroorotate + H2O = N-carbamoyl-L-aspartate + H(+). Its pathway is pyrimidine metabolism; UMP biosynthesis via de novo pathway; (S)-dihydroorotate from bicarbonate: step 3/3. Functionally, catalyzes the reversible cyclization of carbamoyl aspartate to dihydroorotate. This chain is Dihydroorotase, found in Stutzerimonas stutzeri (strain A1501) (Pseudomonas stutzeri).